Reading from the N-terminus, the 258-residue chain is Hydroxyacylglutathione hydrolase (258 aa).

H52, H54, D56, H57, H109, D126, and H164 together coordinate Zn(2+).

This sequence belongs to the metallo-beta-lactamase superfamily. Glyoxalase II family. Monomer. Zn(2+) serves as cofactor.

It carries out the reaction an S-(2-hydroxyacyl)glutathione + H2O = a 2-hydroxy carboxylate + glutathione + H(+). The protein operates within secondary metabolite metabolism; methylglyoxal degradation; (R)-lactate from methylglyoxal: step 2/2. In terms of biological role, thiolesterase that catalyzes the hydrolysis of S-D-lactoyl-glutathione to form glutathione and D-lactic acid. This is Hydroxyacylglutathione hydrolase from Xylella fastidiosa (strain 9a5c).